Consider the following 483-residue polypeptide: Low-density lipoprotein receptor-related protein 11 (483 aa).

The signal sequence occupies residues 1 to 32; that stretch reads MATRGGGPGPGFRHRALRGLLLLCLWLPGSRP. The Extracellular segment spans residues 33–433; it reads GEPAAPSSGV…GGEHPAPEAG (401 aa). The 88-residue stretch at 85 to 172 folds into the MANSC domain; sequence AVPDTIIRTQ…FAPLRGYRTY (88 aa). N152 and N275 each carry an N-linked (GlcNAc...) asparagine glycan. In terms of domain architecture, PKD spans 193-287; the sequence is PVSKAGKDVV…VTVLPRPYST (95 aa). An LDL-receptor class A domain is found at 293–329; that stretch reads ACSRYHFFCDSGCCIDIALACDGVRQCPDGSDEDFCQ. Disulfide bonds link C294–C306, C301–C319, and C313–C328. The tract at residues 346–428 is disordered; it reads AQPGAMGLNE…KSGQAGGEHP (83 aa). Composition is skewed to polar residues over residues 367–376 and 385–407; these read RATTHNQPAT and HSTQ…SSGK. The N-linked (GlcNAc...) asparagine glycan is linked to N403. Residues 408-418 show a composition bias toward basic and acidic residues; sequence NQEEGNYDLKS. The chain crosses the membrane as a helical span at residues 434-456; it reads AVLPLALGLAITVLLLLMVTCRL. Over 457–483 the chain is Cytoplasmic; the sequence is RLVKQKLKKARPITSEESDYLINGMYL. S474 is modified (phosphoserine).

It belongs to the LDLR family.

The protein localises to the membrane. In Mus musculus (Mouse), this protein is Low-density lipoprotein receptor-related protein 11 (Lrp11).